The chain runs to 206 residues: Protein Mabiki (206 aa).

A disordered region spans residues 54–77; sequence FSDQDADFPPLPKRRRLGSSSSSV.

Functionally, plays a role in inducing apoptosis and is involved in the repair of head patterning defects in the embryo caused by extra maternal copies of the homeotic gene bicoid. This chain is Protein Mabiki, found in Drosophila melanogaster (Fruit fly).